Here is a 172-residue protein sequence, read N- to C-terminus: NADH-ubiquinone oxidoreductase chain 6 (172 aa).

The next 5 helical transmembrane spans lie at 1–21 (MTYF…AVAS), 27–47 (YGVV…LSLG), 48–68 (VSFV…VVFV), 87–107 (VVGY…VGGF), and 138–158 (CGVG…FVVL).

It belongs to the complex I subunit 6 family.

It localises to the mitochondrion membrane. It catalyses the reaction a ubiquinone + NADH + 5 H(+)(in) = a ubiquinol + NAD(+) + 4 H(+)(out). Core subunit of the mitochondrial membrane respiratory chain NADH dehydrogenase (Complex I) that is believed to belong to the minimal assembly required for catalysis. Complex I functions in the transfer of electrons from NADH to the respiratory chain. The immediate electron acceptor for the enzyme is believed to be ubiquinone. The polypeptide is NADH-ubiquinone oxidoreductase chain 6 (MT-ND6) (Uria lomvia (Thick-billed murre)).